A 184-amino-acid chain; its full sequence is Photosystem I assembly protein Ycf4 (184 aa).

The next 2 helical transmembrane spans lie at Asn21–Tyr43 and Ile58–Leu80.

It belongs to the Ycf4 family.

Its subcellular location is the plastid. It is found in the chloroplast thylakoid membrane. Its function is as follows. Seems to be required for the assembly of the photosystem I complex. This chain is Photosystem I assembly protein Ycf4, found in Calycanthus floridus var. glaucus (Eastern sweetshrub).